Consider the following 308-residue polypeptide: Elongation factor Ts (308 aa).

Residues 80–83 form an involved in Mg(2+) ion dislocation from EF-Tu region; that stretch reads TDFV.

The protein belongs to the EF-Ts family.

The protein resides in the cytoplasm. Its function is as follows. Associates with the EF-Tu.GDP complex and induces the exchange of GDP to GTP. It remains bound to the aminoacyl-tRNA.EF-Tu.GTP complex up to the GTP hydrolysis stage on the ribosome. The protein is Elongation factor Ts of Allorhizobium ampelinum (strain ATCC BAA-846 / DSM 112012 / S4) (Agrobacterium vitis (strain S4)).